We begin with the raw amino-acid sequence, 538 residues long: MAVISKKIPAPDKVEIKTALLSVFDKTGIVELAQALSERGVRLLSTGGTYKAIATAGLAVTDVSDITGFPEIMDGRVKTLHPTVHGGLLAIRDDSEHQEAMKKHGIEGIDLAVINLYPFEEVRAAGGDYPTTVENIDIGGPAMIRASAKNHAYVTILTDPNDYAEFKEQLSADAGKTAYAFRQRMAAKAYARTAAYDAAISNWFAEALSIDAPRHRVIGGVLKEEMRYGENPHQKAAFYVTGEKRPGVSTAVLLQGKQLSYNNINDTDAAYELVAEFLPEKAPACAIIKHANPCGVATGSSLVEAYRRALACDSVSAFGGIIALNQILDAETAEEIVKLFTEVIIAPDVTEEAKAIVVRKPNLRLLSAGGLPDPRVAGLTAKTVSGGLLVQSRDNGMVEDLELKVVTKRAPTSQELEDMKFAFKVGKHVKSNAVVYAKDGQTAGIGAGQMSRVDSARIAALKAEEAAKALGLAVPMTKGSAVASEAFLPFADGLLSMIAAGATAVIQPGGSMRDQEVIDAANEHGIAMVFTGMRHFRH.

An MGS-like domain is found at 8-158 (IPAPDKVEIK…KNHAYVTILT (151 aa)).

The protein belongs to the PurH family.

It catalyses the reaction (6R)-10-formyltetrahydrofolate + 5-amino-1-(5-phospho-beta-D-ribosyl)imidazole-4-carboxamide = 5-formamido-1-(5-phospho-D-ribosyl)imidazole-4-carboxamide + (6S)-5,6,7,8-tetrahydrofolate. The enzyme catalyses IMP + H2O = 5-formamido-1-(5-phospho-D-ribosyl)imidazole-4-carboxamide. The protein operates within purine metabolism; IMP biosynthesis via de novo pathway; 5-formamido-1-(5-phospho-D-ribosyl)imidazole-4-carboxamide from 5-amino-1-(5-phospho-D-ribosyl)imidazole-4-carboxamide (10-formyl THF route): step 1/1. Its pathway is purine metabolism; IMP biosynthesis via de novo pathway; IMP from 5-formamido-1-(5-phospho-D-ribosyl)imidazole-4-carboxamide: step 1/1. The chain is Bifunctional purine biosynthesis protein PurH from Rhizobium etli (strain CIAT 652).